Consider the following 295-residue polypeptide: Indole-3-glycerol phosphate synthase (295 aa).

The protein belongs to the TrpC family.

It catalyses the reaction 1-(2-carboxyphenylamino)-1-deoxy-D-ribulose 5-phosphate + H(+) = (1S,2R)-1-C-(indol-3-yl)glycerol 3-phosphate + CO2 + H2O. The protein operates within amino-acid biosynthesis; L-tryptophan biosynthesis; L-tryptophan from chorismate: step 4/5. This is Indole-3-glycerol phosphate synthase from Prochlorococcus marinus subsp. pastoris (strain CCMP1986 / NIES-2087 / MED4).